Consider the following 463-residue polypeptide: Hexose-6-phosphate:phosphate antiporter (463 aa).

The Cytoplasmic portion of the chain corresponds to 1 to 24 (MLAFLNQVRKPTLDLPLDVRRKMW). A helical transmembrane segment spans residues 25–45 (FKPFMQSYLVVFIGYLTMYLI). At 46-60 (RKNFNIAQNDMISTY) the chain is on the periplasmic side. Residues 61–81 (GLSMTELGMIGLGFSITYGVG) traverse the membrane as a helical segment. The Cytoplasmic portion of the chain corresponds to 82–96 (KTLVSYYADGKNTKQ). The helical transmembrane segment at 97 to 117 (FLPFMLILSAICMLGFSASMG) threads the bilayer. Residues 118 to 122 (AGSTS) are Periplasmic-facing. Residues 123 to 143 (LFLMIAFYALSGFFQSTGGSC) form a helical membrane-spanning segment. The Cytoplasmic portion of the chain corresponds to 144 to 159 (SYSTITKWTPRRKRGT). The chain crosses the membrane as a helical span at residues 160–180 (FLGFWNISHNLGGAGAAGVAL). Topologically, residues 181-189 (FGANYLFDG) are periplasmic. A helical transmembrane segment spans residues 190-210 (HVIGMFIFPSIIALIVGFIGL). Residues 211-259 (RFGSDSPESYGLGKAEELFGEEISEEDKETEENEMTKWQIFVEYVLKNK) lie on the Cytoplasmic side of the membrane. Residues 260 to 280 (VIWLLCFSNIFLYVVRIGIDQ) form a helical membrane-spanning segment. The Periplasmic segment spans residues 281-297 (WSTVYAFQELKLSKEVA). The helical transmembrane segment at 298 to 318 (IQGFTLFEVGALVGTLLWGWL) threads the bilayer. Topologically, residues 319–326 (SDLANGRR) are cytoplasmic. The chain crosses the membrane as a helical span at residues 327-347 (ALVACVALALIIATLGVYQHA). Residues 348–357 (SNQYVYLASL) are Periplasmic-facing. The helical transmembrane segment at 358-378 (FALGFLVFGPQLLIGVAAVGF) threads the bilayer. Residues 379–382 (VPKK) lie on the Cytoplasmic side of the membrane. A helical membrane pass occupies residues 383–403 (AIGAADGIKGTFAYLIGDSFA). At 404–425 (KLGLGMIADGTPVFGLTGWAGT) the chain is on the periplasmic side. The chain crosses the membrane as a helical span at residues 426–446 (FAALDAAAIGCICLMAMVAVM). At 447-463 (EERKIRREKKIQQVNIA) the chain is on the cytoplasmic side.

The protein belongs to the major facilitator superfamily. Organophosphate:Pi antiporter (OPA) (TC 2.A.1.4) family.

The protein localises to the cell inner membrane. Functionally, mediates the exchange of external hexose 6-phosphate and internal inorganic phosphate. This Salmonella typhimurium (strain LT2 / SGSC1412 / ATCC 700720) protein is Hexose-6-phosphate:phosphate antiporter (uhpT).